A 131-amino-acid chain; its full sequence is D-ribose pyranase (131 aa).

The active-site Proton donor is His-20. Residues Asp-28, His-98, and 120-122 (YAN) contribute to the substrate site.

This sequence belongs to the RbsD / FucU family. RbsD subfamily. In terms of assembly, homodecamer.

Its subcellular location is the cytoplasm. The catalysed reaction is beta-D-ribopyranose = beta-D-ribofuranose. It functions in the pathway carbohydrate metabolism; D-ribose degradation; D-ribose 5-phosphate from beta-D-ribopyranose: step 1/2. In terms of biological role, catalyzes the interconversion of beta-pyran and beta-furan forms of D-ribose. The polypeptide is D-ribose pyranase (Bacillus licheniformis (strain ATCC 14580 / DSM 13 / JCM 2505 / CCUG 7422 / NBRC 12200 / NCIMB 9375 / NCTC 10341 / NRRL NRS-1264 / Gibson 46)).